A 281-amino-acid polypeptide reads, in one-letter code: Very long chain fatty acid elongase 7 (281 aa).

A2 carries the post-translational modification N-acetylalanine. Over 2–27 (AFSDLTSRTVRFYDNWIKDADPRVED) the chain is Lumenal. Residues 28 to 48 (YLLMSSPLPQTIILGLYVYFV) form a helical membrane-spanning segment. Over 49–72 (TSLGPKLMENRKPFELKKAMITYN) the chain is Cytoplasmic. A helical membrane pass occupies residues 73–93 (FFIVLFSVYMCYEFVMSGWGT). Topologically, residues 94–115 (GYSFRCDIVDYSQSPRAMRMVH) are lumenal. C99 and C231 are oxidised to a cystine. Residues 116 to 136 (TCWLYYFSKFIELLDTIFFVL) form a helical membrane-spanning segment. 3-oxoeicosanoyl-CoA contacts are provided by K124, R137, K139, Q142, and H147. At 137 to 142 (RKKNSQ) the chain is on the cytoplasmic side. Residues 143 to 162 (VTFLHVFHHTIMPWTWWFGV) traverse the membrane as a helical segment. Residues 147–151 (HVFHH) carry the HxxHH motif motif. The Nucleophile role is filled by H150. At 163-171 (KFAAGGLGT) the chain is on the lumenal side. Residues 172–194 (FHAFLNTAVHVVMYSYYGLCAMG) traverse the membrane as a helical segment. The 3-oxoeicosanoyl-CoA site is built by Y187, K204, T208, and Q211. The Cytoplasmic portion of the chain corresponds to 195–206 (PAYQKYLWWKKH). The helical transmembrane segment at 207–227 (LTSLQLVQFVLVTIHIGQIFF) threads the bilayer. Over 228–236 (MEDCNYQYP) the chain is Lumenal. A helical membrane pass occupies residues 237–257 (VFLYIIMSYGCIFLLLFLHFW). At 258–281 (YRAYTKGQRLPKTLENGNCKSKRH) the chain is on the cytoplasmic side. A 3-oxoeicosanoyl-CoA-binding site is contributed by R266. Residues 277–281 (KSKRH) carry the Di-lysine motif motif.

The protein belongs to the ELO family. ELOVL7 subfamily. Homodimer. Interacts with TECR.

The protein resides in the endoplasmic reticulum membrane. It carries out the reaction a very-long-chain acyl-CoA + malonyl-CoA + H(+) = a very-long-chain 3-oxoacyl-CoA + CO2 + CoA. The enzyme catalyses eicosanoyl-CoA + malonyl-CoA + H(+) = 3-oxodocosanoyl-CoA + CO2 + CoA. The catalysed reaction is (5Z,8Z,11Z,14Z)-eicosatetraenoyl-CoA + malonyl-CoA + H(+) = (7Z,10Z,13Z,16Z)-3-oxodocosatetraenoyl-CoA + CO2 + CoA. It catalyses the reaction (6Z,9Z,12Z)-octadecatrienoyl-CoA + malonyl-CoA + H(+) = (8Z,11Z,14Z)-3-oxoeicosatrienoyl-CoA + CO2 + CoA. It carries out the reaction (9Z,12Z)-octadecadienoyl-CoA + malonyl-CoA + H(+) = (11Z,14Z)-3-oxoicosa-11,14-dienoyl-CoA + CO2 + CoA. The enzyme catalyses (9Z)-octadecenoyl-CoA + malonyl-CoA + H(+) = 3-oxo-(11Z)-eicosenoyl-CoA + CO2 + CoA. The catalysed reaction is octadecanoyl-CoA + malonyl-CoA + H(+) = 3-oxoeicosanoyl-CoA + CO2 + CoA. It catalyses the reaction hexadecanoyl-CoA + malonyl-CoA + H(+) = 3-oxooctadecanoyl-CoA + CO2 + CoA. It carries out the reaction (9Z,12Z,15Z)-octadecatrienoyl-CoA + malonyl-CoA + H(+) = (11Z,14Z,17Z)-3-oxoeicosatrienoyl-CoA + CO2 + CoA. It participates in lipid metabolism; fatty acid biosynthesis. Functionally, catalyzes the first and rate-limiting reaction of the four reactions that constitute the long-chain fatty acids elongation cycle. This endoplasmic reticulum-bound enzymatic process allows the addition of 2 carbons to the chain of long- and very long-chain fatty acids (VLCFAs) per cycle. Condensing enzyme with higher activity toward C18 acyl-CoAs, especially C18:3(n-3) acyl-CoAs and C18:3(n-6)-CoAs. Also active toward C20:4-, C18:0-, C18:1-, C18:2- and C16:0-CoAs, and weakly toward C20:0-CoA. Little or no activity toward C22:0-, C24:0-, or C26:0-CoAs. May participate in the production of saturated and polyunsaturated VLCFAs of different chain lengths that are involved in multiple biological processes as precursors of membrane lipids and lipid mediators. The protein is Very long chain fatty acid elongase 7 of Mus musculus (Mouse).